A 335-amino-acid polypeptide reads, in one-letter code: Methyltransferase pgmE (335 aa).

It belongs to the methyltransferase superfamily.

Its pathway is pigment biosynthesis. It participates in secondary metabolite biosynthesis. Functionally, methyltransferase; part of the gene cluster that mediates the biosynthesis of pleosporalin A, ascomycone A, as well as a third cryptic naphthoquinone derived pigment, all responsible for the coloration of conidia. Essential for the production of pleosporalin A, but not the 2 other final products. The pathway begins with the biosynthesis of the cyclized heptaketide 3-acetonyl-1,6,8-trihydroxy-2-naphthaldehyde by the NR-PKS pgmA. The C-6 hydroxyl group is further methylated by the O-methyltransferase pgmB to yield fusarubinaldehyde which is in turn oxidized by the cytochrome P450 monooxygenase pgmC at C-9. The C-1 hydroxyl group is then methylated spontaneously. Although pgmE, pgmD and pgmH are essential for the production of pleosporalin A, it is not the case for the 2 other final products and it remains difficult to assign a specific function to each enzyme. PgmF and pgmG seem not to be involved in pigment biosynthesis although they were regulated by the cluster-specific transcription factor pgmR. The polypeptide is Methyltransferase pgmE (Aspergillus terreus).